Consider the following 364-residue polypeptide: Probable endopolygalacturonase B (364 aa).

The first 20 residues, 1–20, serve as a signal peptide directing secretion; the sequence is MHFFQSSLVAATMGAALVAA. Residues 21–29 constitute a propeptide that is removed on maturation; it reads APAADLETR. The cysteines at positions 32 and 47 are disulfide-linked. N-linked (GlcNAc...) asparagine glycosylation is found at Asn-138 and Asn-141. PbH1 repeat units lie at residues 159–188, 189–210, 211–231, 240–261, 269–291, and 303–324; these read SDHL…DVGS, STYI…AVNS, GEHI…SIGS, VNDV…RIKT, VTGV…VVQQ, and TNGV…TSSA. The active-site Proton donor is the Asp-203. The cysteines at positions 205 and 221 are disulfide-linked. Residue His-225 is part of the active site. A disulfide bond links Cys-331 and Cys-336. Asn-338 carries an N-linked (GlcNAc...) asparagine glycan. Residues Cys-355 and Cys-364 are joined by a disulfide bond.

It belongs to the glycosyl hydrolase 28 family.

The protein localises to the secreted. The enzyme catalyses (1,4-alpha-D-galacturonosyl)n+m + H2O = (1,4-alpha-D-galacturonosyl)n + (1,4-alpha-D-galacturonosyl)m.. In terms of biological role, involved in maceration and soft-rotting of plant tissue. Hydrolyzes the 1,4-alpha glycosidic bonds of de-esterified pectate in the smooth region of the plant cell wall. This is Probable endopolygalacturonase B (pgaB) from Aspergillus fumigatus (strain ATCC MYA-4609 / CBS 101355 / FGSC A1100 / Af293) (Neosartorya fumigata).